The sequence spans 490 residues: Cobyric acid synthase (490 aa).

Positions 252 to 439 (RLKVVVPVLP…LHGLFESTAA (188 aa)) constitute a GATase cobBQ-type domain. Residue Cys333 is the Nucleophile of the active site. Residue His431 is part of the active site.

The protein belongs to the CobB/CobQ family. CobQ subfamily.

It functions in the pathway cofactor biosynthesis; adenosylcobalamin biosynthesis. In terms of biological role, catalyzes amidations at positions B, D, E, and G on adenosylcobyrinic A,C-diamide. NH(2) groups are provided by glutamine, and one molecule of ATP is hydrogenolyzed for each amidation. This is Cobyric acid synthase from Pseudomonas aeruginosa (strain LESB58).